We begin with the raw amino-acid sequence, 326 residues long: Putative nickel insertion protein (326 aa).

This sequence belongs to the LarC family.

The protein is Putative nickel insertion protein of Enterococcus faecalis (strain ATCC 700802 / V583).